We begin with the raw amino-acid sequence, 138 residues long: ATP synthase epsilon chain (138 aa).

This sequence belongs to the ATPase epsilon chain family. In terms of assembly, F-type ATPases have 2 components, CF(1) - the catalytic core - and CF(0) - the membrane proton channel. CF(1) has five subunits: alpha(3), beta(3), gamma(1), delta(1), epsilon(1). CF(0) has three main subunits: a, b and c.

The protein localises to the cell membrane. Its function is as follows. Produces ATP from ADP in the presence of a proton gradient across the membrane. The protein is ATP synthase epsilon chain of Caldanaerobacter subterraneus subsp. tengcongensis (strain DSM 15242 / JCM 11007 / NBRC 100824 / MB4) (Thermoanaerobacter tengcongensis).